Reading from the N-terminus, the 223-residue chain is Thymidylate kinase (223 aa).

ATP is bound at residue 7-14 (GIDGAGKS).

This sequence belongs to the thymidylate kinase family.

The catalysed reaction is dTMP + ATP = dTDP + ADP. Phosphorylation of dTMP to form dTDP in both de novo and salvage pathways of dTTP synthesis. The polypeptide is Thymidylate kinase (Prosthecochloris aestuarii (strain DSM 271 / SK 413)).